A 629-amino-acid polypeptide reads, in one-letter code: 1-deoxy-D-xylulose-5-phosphate synthase (629 aa).

Residues His72 and 113 to 115 each bind thiamine diphosphate; that span reads GHA. A Mg(2+)-binding site is contributed by Asp144. Residues 145–146, Asn174, Tyr287, and Glu370 contribute to the thiamine diphosphate site; that span reads GA. Position 174 (Asn174) interacts with Mg(2+).

It belongs to the transketolase family. DXPS subfamily. As to quaternary structure, homodimer. The cofactor is Mg(2+). Thiamine diphosphate serves as cofactor.

It catalyses the reaction D-glyceraldehyde 3-phosphate + pyruvate + H(+) = 1-deoxy-D-xylulose 5-phosphate + CO2. Its pathway is metabolic intermediate biosynthesis; 1-deoxy-D-xylulose 5-phosphate biosynthesis; 1-deoxy-D-xylulose 5-phosphate from D-glyceraldehyde 3-phosphate and pyruvate: step 1/1. Functionally, catalyzes the acyloin condensation reaction between C atoms 2 and 3 of pyruvate and glyceraldehyde 3-phosphate to yield 1-deoxy-D-xylulose-5-phosphate (DXP). The polypeptide is 1-deoxy-D-xylulose-5-phosphate synthase (Prochlorococcus marinus (strain MIT 9301)).